Consider the following 433-residue polypeptide: 23S rRNA (uracil(1939)-C(5))-methyltransferase RlmD (433 aa).

The TRAM domain maps to 10–68 (RTTTRQIITVSVNDLDSFGQGVARHNGKTLFIPGLLPQENAEVTVTEDKKQYARAKVVR). The [4Fe-4S] cluster site is built by C81, C87, C90, and C162. The S-adenosyl-L-methionine site is built by Q265, F294, N299, E315, N342, and D363. Catalysis depends on C389, which acts as the Nucleophile.

It belongs to the class I-like SAM-binding methyltransferase superfamily. RNA M5U methyltransferase family. RlmD subfamily.

It carries out the reaction uridine(1939) in 23S rRNA + S-adenosyl-L-methionine = 5-methyluridine(1939) in 23S rRNA + S-adenosyl-L-homocysteine + H(+). Its function is as follows. Catalyzes the formation of 5-methyl-uridine at position 1939 (m5U1939) in 23S rRNA. The polypeptide is 23S rRNA (uracil(1939)-C(5))-methyltransferase RlmD (Shigella boydii serotype 4 (strain Sb227)).